Here is a 391-residue protein sequence, read N- to C-terminus: Pyruvate dehydrogenase E1 component subunit beta-3, chloroplastic (391 aa).

The N-terminal 35 residues, Met-1–Val-35, are a transit peptide targeting the chloroplast. Glu-127 contributes to the thiamine diphosphate binding site. Residues Ile-180, Ala-228, Ile-229, and Asn-233 each contribute to the K(+) site.

Tetramer of 2 alpha and 2 beta subunits. Thiamine diphosphate is required as a cofactor.

The protein resides in the plastid. The protein localises to the chloroplast. It catalyses the reaction N(6)-[(R)-lipoyl]-L-lysyl-[protein] + pyruvate + H(+) = N(6)-[(R)-S(8)-acetyldihydrolipoyl]-L-lysyl-[protein] + CO2. The pyruvate dehydrogenase complex catalyzes the overall conversion of pyruvate to acetyl-CoA and CO(2). It contains multiple copies of three enzymatic components: pyruvate dehydrogenase (E1), dihydrolipoamide acetyltransferase (E2) and lipoamide dehydrogenase (E3). The polypeptide is Pyruvate dehydrogenase E1 component subunit beta-3, chloroplastic (Oryza sativa subsp. japonica (Rice)).